Consider the following 296-residue polypeptide: Circadian clock oscillator protein KaiA (296 aa).

Positions 2–133 (ARPGLTIALL…LRQGRADGRS (132 aa)) are psR domain, binds oxidized quinones. Residues 2-152 (ARPGLTIALL…KLSRRLQERL (151 aa)) enclose the KaiA N-terminal domain. Positions 153-161 (GYLGVFYKR) are flexible linker. Positions 162-270 (DPSRFLGSLP…CEMYRRSIPP (109 aa)) constitute a KaiA C-terminal domain.

Homodimer. The KaiABC complex composition changes during the circadian cycle to control KaiC phosphorylation. Complexes KaiC(6), KaiA(2-4):KaiC(6), KaiB(6):KaiC(6) and KaiC(6):KaiB(6):KaiA(12) are among the most important forms, many form cooperatively. KaiA and CikA bind to the same region of the KaiB(fs) form and therefore compete.

Functionally, key component of the KaiABC oscillator complex, which constitutes the main circadian regulator in cyanobacteria. Complex composition changes during the circadian cycle to control KaiC phosphorylation. KaiA stimulates KaiC autophosphorylation, while KaiB sequesters KaiA, leading to KaiC autodephosphorylation. KaiA binding to the KaiC CII domain during the subjective day yields KaiA(2-4):KaiC(6) complexes which stimulate KaiC autophosphorylation. Phospho-Ser-431 KaiC accumulation triggers binding of KaiB during the subjective night to form the KaiB(6):KaiC(6) complex, leading to changes in the output regulators CikA and SasA. KaiB(6):KaiC(6) formation exposes a site for KaiA binding on KaiB that sequesters KaiA from KaiC's CII domain, making the KaiC(6):KaiB(6):KaiA(12) complex resulting in KaiC autodephosphorylation. Complete dephosphorylation of KaiC leads to dissociation of KaiA(2):KaiB(1), completing 1 cycle of the Kai oscillator. In terms of biological role, binds oxidized quinones via the N-terminal PsR domain, allowing it to sense redox changes and possibly mediate clock input. This chain is Circadian clock oscillator protein KaiA, found in Parasynechococcus marenigrum (strain WH8102).